Consider the following 56-residue polypeptide: Photosystem II reaction center protein K (56 aa).

Residues 1 to 19 (MLNFLLQNTFVLWSNFILC) constitute a propeptide that is removed on maturation. Residues 35 to 55 (MPVIPVFFFLLAFVWQAAVSF) traverse the membrane as a helical segment.

This sequence belongs to the PsbK family. In terms of assembly, PSII is composed of 1 copy each of membrane proteins PsbA, PsbB, PsbC, PsbD, PsbE, PsbF, PsbH, PsbI, PsbJ, PsbK, PsbL, PsbM, PsbT, PsbX, PsbY, PsbZ, Psb30/Ycf12, at least 3 peripheral proteins of the oxygen-evolving complex and a large number of cofactors. It forms dimeric complexes.

Its subcellular location is the plastid. It localises to the chloroplast thylakoid membrane. One of the components of the core complex of photosystem II (PSII). PSII is a light-driven water:plastoquinone oxidoreductase that uses light energy to abstract electrons from H(2)O, generating O(2) and a proton gradient subsequently used for ATP formation. It consists of a core antenna complex that captures photons, and an electron transfer chain that converts photonic excitation into a charge separation. The polypeptide is Photosystem II reaction center protein K (Welwitschia mirabilis (Tree tumbo)).